A 379-amino-acid chain; its full sequence is Succinyl-diaminopimelate desuccinylase (379 aa).

Position 70 (H70) interacts with Zn(2+). The active site involves D72. D103 is a binding site for Zn(2+). Residue E137 is the Proton acceptor of the active site. Residues E138, E166, and H352 each coordinate Zn(2+).

This sequence belongs to the peptidase M20A family. DapE subfamily. Homodimer. Requires Zn(2+) as cofactor. It depends on Co(2+) as a cofactor.

The enzyme catalyses N-succinyl-(2S,6S)-2,6-diaminopimelate + H2O = (2S,6S)-2,6-diaminopimelate + succinate. The protein operates within amino-acid biosynthesis; L-lysine biosynthesis via DAP pathway; LL-2,6-diaminopimelate from (S)-tetrahydrodipicolinate (succinylase route): step 3/3. Functionally, catalyzes the hydrolysis of N-succinyl-L,L-diaminopimelic acid (SDAP), forming succinate and LL-2,6-diaminopimelate (DAP), an intermediate involved in the bacterial biosynthesis of lysine and meso-diaminopimelic acid, an essential component of bacterial cell walls. The sequence is that of Succinyl-diaminopimelate desuccinylase from Paraburkholderia xenovorans (strain LB400).